Here is an 84-residue protein sequence, read N- to C-terminus: Large ribosomal subunit protein bL31B (84 aa).

The protein belongs to the bacterial ribosomal protein bL31 family. Type B subfamily. Part of the 50S ribosomal subunit.

The chain is Large ribosomal subunit protein bL31B from Streptomyces griseus subsp. griseus (strain JCM 4626 / CBS 651.72 / NBRC 13350 / KCC S-0626 / ISP 5235).